The following is a 132-amino-acid chain: MVTDTISDMLTRIRNANMIKHQIVQIPATKMSKAITNILKEEGFIEDYEIYMENSYQFLLISLKYKGKSREPVICKMVRVSKPGLRVYSKSKKLPKVLDNLGIAIISTSKGVMTNLKAKELGIGGEVLCYIW.

It belongs to the universal ribosomal protein uS8 family. Part of the 30S ribosomal subunit.

The protein localises to the plastid. It is found in the chloroplast. In terms of biological role, one of the primary rRNA binding proteins, it binds directly to 16S rRNA central domain where it helps coordinate assembly of the platform of the 30S subunit. This chain is Small ribosomal subunit protein uS8c (rps8), found in Trieres chinensis (Marine centric diatom).